We begin with the raw amino-acid sequence, 840 residues long: Translation initiation factor IF-2 (840 aa).

Residues 1–251 (MTEEKKFSSS…GPAVPATERK (251 aa)) are disordered. 2 stretches are compositionally biased toward polar residues: residues 38 to 50 (DGTN…TPRS) and 65 to 83 (NRHT…ASRP). Positions 84 to 102 (NQSKSQGQGGRNNQRPGSR) are enriched in low complexity. Basic and acidic residues-rich tracts occupy residues 110–135 (PMIR…KTDN) and 158–168 (KPAEQSKKAAE). The segment covering 169–207 (KPAQTKPKTAETKTTATTTQSGTGKFGGALASGNNSARN) has biased composition (low complexity). A compositionally biased stretch (basic residues) spans 230–239 (GSKKSRRIAA). Residues 341–510 (ARPPVVTIMG…LLQAEVLELK (170 aa)) form the tr-type G domain. A G1 region spans residues 350-357 (GHVDHGKT). 350 to 357 (GHVDHGKT) provides a ligand contact to GTP. Residues 375 to 379 (GITQH) are G2. The tract at residues 396–399 (DTPG) is G3. GTP contacts are provided by residues 396-400 (DTPGH) and 450-453 (NKID). Residues 450 to 453 (NKID) are G4. The interval 486–488 (SAK) is G5.

It belongs to the TRAFAC class translation factor GTPase superfamily. Classic translation factor GTPase family. IF-2 subfamily.

It localises to the cytoplasm. One of the essential components for the initiation of protein synthesis. Protects formylmethionyl-tRNA from spontaneous hydrolysis and promotes its binding to the 30S ribosomal subunits. Also involved in the hydrolysis of GTP during the formation of the 70S ribosomal complex. This chain is Translation initiation factor IF-2, found in Leuconostoc citreum (strain KM20).